The following is a 486-amino-acid chain: Cardiolipin synthase A (486 aa).

A run of 2 helical transmembrane segments spans residues 3 to 23 and 38 to 58; these read TVYT…IAGV and MAWL…YLAV. 2 PLD phosphodiesterase domains span residues 219–246 and 399–426; these read MDLR…VDPR and EGGL…DMRS. Catalysis depends on residues His-224, Lys-226, Asp-231, His-404, Lys-406, and Asp-411.

This sequence belongs to the phospholipase D family. Cardiolipin synthase subfamily. ClsA sub-subfamily.

The protein resides in the cell inner membrane. The enzyme catalyses 2 a 1,2-diacyl-sn-glycero-3-phospho-(1'-sn-glycerol) = a cardiolipin + glycerol. Catalyzes the reversible phosphatidyl group transfer from one phosphatidylglycerol molecule to another to form cardiolipin (CL) (diphosphatidylglycerol) and glycerol. This chain is Cardiolipin synthase A, found in Escherichia coli O7:K1 (strain IAI39 / ExPEC).